A 641-amino-acid polypeptide reads, in one-letter code: Probable potassium transport system protein Kup (641 aa).

Transmembrane regions (helical) follow at residues 29–49, 66–86, 119–139, 156–176, 185–205, 231–251, 266–286, 298–318, 356–376, 384–404, 415–435, and 438–458; these read ISLAALGVVFGDIGTSPLYAI, ILGVLSLLFWALILIVSLKYL, WVLVSIGLFGASVLLGEAMIT, PAFADMVIPATVVILAGLFLF, GALFGPIILLWFFCLGTLGII, LHGFLVLGAVFLAVTGAEALY, WVLFVLPALLLNYFGQGAFLL, ALVPSWAMIPMVLLATVATVI, IYVPAANWALMAATIGLVLGF, AAYGASMTTTMLISTILFFFV, VLWALVSLFAVVDLSFFGASM, and LFHGAWFPLAVGLLMFTLMNT.

Belongs to the HAK/KUP transporter (TC 2.A.72) family.

It is found in the cell inner membrane. The enzyme catalyses K(+)(in) + H(+)(in) = K(+)(out) + H(+)(out). Its function is as follows. Transport of potassium into the cell. Likely operates as a K(+):H(+) symporter. The sequence is that of Probable potassium transport system protein Kup from Chlorobium phaeovibrioides (strain DSM 265 / 1930) (Prosthecochloris vibrioformis (strain DSM 265)).